The primary structure comprises 112 residues: Larval cuticle protein 4 (112 aa).

An N-terminal signal peptide occupies residues 1–16 (MFKILLVCALVALVAA). Residues 31–92 (ADGFVSKLVL…PQSDLLPTPP (62 aa)) form the Chitin-binding type R&amp;R domain.

Component of the larval cuticle. The sequence is that of Larval cuticle protein 4 (Lcp4) from Drosophila melanogaster (Fruit fly).